The sequence spans 65 residues: Large ribosomal subunit protein bL33 (65 aa).

Residues 17 to 40 are disordered; the sequence is SRSVPSSEKRSAGVSRYTTEKNRR.

The protein belongs to the bacterial ribosomal protein bL33 family.

This Prochlorococcus marinus (strain NATL1A) protein is Large ribosomal subunit protein bL33.